The chain runs to 207 residues: Nuclear transcription factor Y subunit beta (207 aa).

Residues 1–52 (MTMDGDSSTTDASQLGISADYIGGSHYVIQPHDDTEDSMNDHEDTNGSKESF) form an a domain region. Residues 27–52 (YVIQPHDDTEDSMNDHEDTNGSKESF) form a disordered region. A compositionally biased stretch (basic and acidic residues) spans 39–52 (MNDHEDTNGSKESF). Positions 53–142 (REQDIYLPIA…PLKLYLQKFR (90 aa)) are b domain. A DNA-binding region spans residues 59–65 (LPIANVA). Residues 86–97 (VQECVSEFISFI) form a subunit association domain (SAD) region. Residue K140 forms a Glycyl lysine isopeptide (Lys-Gly) (interchain with G-Cter in ubiquitin) linkage. Positions 143–207 (EAMKGEKGIG…ISGVQQIQFS (65 aa)) are c domain.

This sequence belongs to the NFYB/HAP3 subunit family. As to quaternary structure, heterotrimeric transcription factor composed of three components, NF-YA, NF-YB and NF-YC. NF-YB and NF-YC must interact and dimerize for NF-YA association and DNA binding. Interacts with C1QBP. Monoubiquitination at Lys-140 plays an important role in transcriptional activation by allowing the deposition of histone H3 methylations as well as histone H2B monoubiquitination at 'Lys-121'.

Its subcellular location is the nucleus. In terms of biological role, component of the sequence-specific heterotrimeric transcription factor (NF-Y) which specifically recognizes a 5'-CCAAT-3' box motif found in the promoters of its target genes. NF-Y can function as both an activator and a repressor, depending on its interacting cofactors. This chain is Nuclear transcription factor Y subunit beta (NFYB), found in Equus caballus (Horse).